We begin with the raw amino-acid sequence, 477 residues long: Ectonucleotide pyrophosphatase/phosphodiesterase family member 5 (477 aa).

A signal peptide spans 1–24 (MTSKFLLVSFILAALSLSTTFSLQ). Zn(2+) is bound by residues Asp36 and Thr72. Thr72 acts as the Nucleophile in catalysis. Asn101 and Asn158 each carry an N-linked (GlcNAc...) asparagine glycan. Asp191, His195, Asp238, and His239 together coordinate Zn(2+). Residues Asn292 and Asn329 are each glycosylated (N-linked (GlcNAc...) asparagine). His339 is a Zn(2+) binding site. Residues Asn362, Asn369, Asn382, and Asn389 are each glycosylated (N-linked (GlcNAc...) asparagine). A helical transmembrane segment spans residues 432–452 (PYFIGVSLGSIIVIVFFVIFI).

This sequence belongs to the nucleotide pyrophosphatase/phosphodiesterase family. It depends on Zn(2+) as a cofactor. Post-translationally, N-glycosylated.

The protein resides in the secreted. It is found in the membrane. In terms of biological role, can hydrolyze NAD but cannot hydrolyze nucleotide di- and triphosphates. Lacks lysopholipase D activity. May play a role in neuronal cell communication. The sequence is that of Ectonucleotide pyrophosphatase/phosphodiesterase family member 5 from Homo sapiens (Human).